Here is a 354-residue protein sequence, read N- to C-terminus: Ferrochelatase (354 aa).

The Fe cation site is built by histidine 191 and glutamate 271.

It belongs to the ferrochelatase family.

The protein resides in the cytoplasm. It carries out the reaction heme b + 2 H(+) = protoporphyrin IX + Fe(2+). It participates in porphyrin-containing compound metabolism; protoheme biosynthesis; protoheme from protoporphyrin-IX: step 1/1. Its function is as follows. Catalyzes the ferrous insertion into protoporphyrin IX. This chain is Ferrochelatase, found in Rickettsia bellii (strain OSU 85-389).